The sequence spans 185 residues: Peptidyl-tRNA hydrolase (185 aa).

Tyr-14 is a tRNA binding site. His-19 functions as the Proton acceptor in the catalytic mechanism. Positions 65, 67, and 113 each coordinate tRNA.

Belongs to the PTH family. As to quaternary structure, monomer.

It is found in the cytoplasm. It catalyses the reaction an N-acyl-L-alpha-aminoacyl-tRNA + H2O = an N-acyl-L-amino acid + a tRNA + H(+). Functionally, hydrolyzes ribosome-free peptidyl-tRNAs (with 1 or more amino acids incorporated), which drop off the ribosome during protein synthesis, or as a result of ribosome stalling. In terms of biological role, catalyzes the release of premature peptidyl moieties from peptidyl-tRNA molecules trapped in stalled 50S ribosomal subunits, and thus maintains levels of free tRNAs and 50S ribosomes. The protein is Peptidyl-tRNA hydrolase of Rickettsia prowazekii (strain Madrid E).